The following is a 118-amino-acid chain: Small ribosomal subunit protein uS13 (118 aa).

The interval 94-118 is disordered; that stretch reads SLPLRGQRTKTNARTRKGPRKPIKR.

It belongs to the universal ribosomal protein uS13 family. Part of the 30S ribosomal subunit. Forms a loose heterodimer with protein S19. Forms two bridges to the 50S subunit in the 70S ribosome.

Functionally, located at the top of the head of the 30S subunit, it contacts several helices of the 16S rRNA. In the 70S ribosome it contacts the 23S rRNA (bridge B1a) and protein L5 of the 50S subunit (bridge B1b), connecting the 2 subunits; these bridges are implicated in subunit movement. Contacts the tRNAs in the A and P-sites. The chain is Small ribosomal subunit protein uS13 from Photobacterium profundum (strain SS9).